Consider the following 498-residue polypeptide: Guanosine-5'-triphosphate,3'-diphosphate pyrophosphatase (498 aa).

Belongs to the GppA/Ppx family. GppA subfamily.

The enzyme catalyses guanosine 3'-diphosphate 5'-triphosphate + H2O = guanosine 3',5'-bis(diphosphate) + phosphate + H(+). The protein operates within purine metabolism; ppGpp biosynthesis; ppGpp from GTP: step 2/2. Functionally, catalyzes the conversion of pppGpp to ppGpp. Guanosine pentaphosphate (pppGpp) is a cytoplasmic signaling molecule which together with ppGpp controls the 'stringent response', an adaptive process that allows bacteria to respond to amino acid starvation, resulting in the coordinated regulation of numerous cellular activities. The protein is Guanosine-5'-triphosphate,3'-diphosphate pyrophosphatase of Yersinia pseudotuberculosis serotype O:1b (strain IP 31758).